The primary structure comprises 185 residues: uncharacterized protein (185 aa).

The G domain occupies 17–137 (GKSSIMNALF…QKPIIVVINK (121 aa)).

This is an uncharacterized protein from Methanocaldococcus jannaschii (strain ATCC 43067 / DSM 2661 / JAL-1 / JCM 10045 / NBRC 100440) (Methanococcus jannaschii).